We begin with the raw amino-acid sequence, 149 residues long: Glycophorin-A (149 aa).

Residues 1-19 form the signal peptide; that stretch reads MYGKIIFVLLLSAIVSISA. The Extracellular segment spans residues 20–90; sequence SSTTEVAMHT…QLVHRFSEPE (71 aa). Ser21 carries O-linked (GalNAc...) serine glycosylation. Thr22, Thr23, and Thr29 each carry an O-linked (GalNAc...) threonine glycan. Ser30 carries O-linked (GalNAc...) serine glycosylation. A glycan (O-linked (GalNAc...) threonine) is linked at Thr31. O-linked (GalNAc...) serine glycosylation occurs at Ser32. Thr35 carries O-linked (GalNAc...) threonine glycosylation. Residues Ser37 and Ser40 are each glycosylated (O-linked (GalNAc...) serine). An O-linked (GalNAc...) threonine glycan is attached at Thr43. Ser44 carries O-linked (GalNAc...) serine glycosylation. Residues Thr51 and Thr55 are each glycosylated (O-linked (GalNAc...) threonine). Residue Ser62 is glycosylated (O-linked (GalNAc...) serine). O-linked (GalNAc...) threonine glycosylation occurs at Thr68. Residues 91 to 113 traverse the membrane as a helical segment; that stretch reads ITLIIFGVMAGVIGTILLIYYSI. The Cytoplasmic portion of the chain corresponds to 114 to 149; sequence RRLIKKSPSDVKPLPSPDTDVPLSSVEIENPETSDQ. The interval 122–149 is disordered; the sequence is SDVKPLPSPDTDVPLSSVEIENPETSDQ. Residues Ser137 and Ser147 each carry the phosphoserine modification.

The protein belongs to the glycophorin-A family. As to quaternary structure, homodimer. Component of the ankyrin-1 complex in the erythrocyte, composed of ANK1, RHCE, RHAG, SLC4A1, EPB42, GYPA, GYPB and AQP1. Interacts with SLC4A1; a GYPA monomer is bound at each end of the SLC4A1 dimer forming a heterotetramer.

Its subcellular location is the cell membrane. Its function is as follows. Component of the ankyrin-1 complex, a multiprotein complex involved in the stability and shape of the erythrocyte membrane. Glycophorin A is the major intrinsic membrane protein of the erythrocyte. The N-terminal glycosylated segment, which lies outside the erythrocyte membrane, has MN blood group receptors. Appears to be important for the function of SLC4A1 and is required for high activity of SLC4A1. May be involved in translocation of SLC4A1 to the plasma membrane. This Pan troglodytes (Chimpanzee) protein is Glycophorin-A.